A 309-amino-acid polypeptide reads, in one-letter code: Coproporphyrin III ferrochelatase (309 aa).

Fe-coproporphyrin III contacts are provided by residues Tyr-12, Arg-29, 45–46, Ser-53, and Tyr-124; that span reads RY. Positions 182 and 263 each coordinate Fe(2+).

Belongs to the ferrochelatase family.

It localises to the cytoplasm. The enzyme catalyses Fe-coproporphyrin III + 2 H(+) = coproporphyrin III + Fe(2+). It participates in porphyrin-containing compound metabolism; protoheme biosynthesis. Functionally, involved in coproporphyrin-dependent heme b biosynthesis. Catalyzes the insertion of ferrous iron into coproporphyrin III to form Fe-coproporphyrin III. The polypeptide is Coproporphyrin III ferrochelatase (Listeria innocua serovar 6a (strain ATCC BAA-680 / CLIP 11262)).